A 415-amino-acid polypeptide reads, in one-letter code: Mitogen-activated protein kinase mpkC (415 aa).

A Protein kinase domain is found at Y20–M299. Residues V26–V34 and K49 each bind ATP. Catalysis depends on D141, which acts as the Proton acceptor. At T171 the chain carries Phosphothreonine. Residues T171–Y173 carry the TXY motif. Residue Y173 is modified to Phosphotyrosine.

It belongs to the protein kinase superfamily. Ser/Thr protein kinase family. MAP kinase subfamily. HOG1 sub-subfamily. Requires Mg(2+) as cofactor. Dually phosphorylated on Thr-171 and Tyr-173, which activates the enzyme.

The catalysed reaction is L-seryl-[protein] + ATP = O-phospho-L-seryl-[protein] + ADP + H(+). The enzyme catalyses L-threonyl-[protein] + ATP = O-phospho-L-threonyl-[protein] + ADP + H(+). With respect to regulation, activated by tyrosine and threonine phosphorylation. Mitogen-activated protein kinase required for growth on media where sorbitol or mannitol is the sole carbon source. The protein is Mitogen-activated protein kinase mpkC (mpkC) of Emericella nidulans (strain FGSC A4 / ATCC 38163 / CBS 112.46 / NRRL 194 / M139) (Aspergillus nidulans).